A 110-amino-acid polypeptide reads, in one-letter code: Cytochrome subunit of sulfide dehydrogenase (110 aa).

The N-terminal stretch at 1–16 (MLAAAPLLLASGNGFA) is a signal peptide. 4 residues coordinate heme c: cysteine 41, cysteine 44, histidine 45, and methionine 83.

In terms of assembly, dimer of one cytochrome and one flavoprotein. In terms of processing, binds 1 heme c group covalently per subunit.

It localises to the periplasm. Monoheme cytochrome that function as the electron transport subunit of sulfide dehydrogenase. The polypeptide is Cytochrome subunit of sulfide dehydrogenase (fccA) (Chlorobaculum tepidum (strain ATCC 49652 / DSM 12025 / NBRC 103806 / TLS) (Chlorobium tepidum)).